We begin with the raw amino-acid sequence, 249 residues long: tRNA (guanine-N(7)-)-methyltransferase (249 aa).

Positions 1–24 (MHSIPADTGHTPSRAPAGNGSPPA) are disordered. S-adenosyl-L-methionine contacts are provided by glutamate 81, glutamate 106, aspartate 133, and aspartate 156. The active site involves aspartate 156. Residue lysine 160 coordinates substrate. The tract at residues 162-167 (RHNKRR) is interaction with RNA. Substrate-binding positions include aspartate 192 and 227–230 (TKFE).

This sequence belongs to the class I-like SAM-binding methyltransferase superfamily. TrmB family.

The enzyme catalyses guanosine(46) in tRNA + S-adenosyl-L-methionine = N(7)-methylguanosine(46) in tRNA + S-adenosyl-L-homocysteine. Its pathway is tRNA modification; N(7)-methylguanine-tRNA biosynthesis. Functionally, catalyzes the formation of N(7)-methylguanine at position 46 (m7G46) in tRNA. The chain is tRNA (guanine-N(7)-)-methyltransferase from Paracidovorax citrulli (strain AAC00-1) (Acidovorax citrulli).